The chain runs to 260 residues: O-antigen export system permease protein RfbA (260 aa).

Helical transmembrane passes span 31-51 (FLGF…YVLL), 63-83 (FPFF…SVGG), 109-129 (VVVT…VLGM), 139-159 (VVLF…LTYI), 173-193 (IVSN…PLST), 201-221 (SLML…AIFY), and 229-249 (EPLM…SSIF). The ABC transmembrane type-2 domain occupies 32-252 (LGFLWTFLNP…WAASSIFESR (221 aa)).

Belongs to the ABC-2 integral membrane protein family.

It localises to the cell inner membrane. May form an ATP-driven O-antigen export apparatus, in association with RfbB. The chain is O-antigen export system permease protein RfbA (rfbA) from Myxococcus xanthus.